A 101-amino-acid polypeptide reads, in one-letter code: MSTVADPRDIIIAPVVSEKSYGLMEQNVYTFLVHPSSNKTQIKIAVEQIFGVKVASVNTVNREGKRKRTRTGYGQRKATKRAMVTLVAGSDPIDIFGGATA.

The protein belongs to the universal ribosomal protein uL23 family. In terms of assembly, part of the 50S ribosomal subunit. Contacts protein L29, and trigger factor when it is bound to the ribosome.

One of the early assembly proteins it binds 23S rRNA. One of the proteins that surrounds the polypeptide exit tunnel on the outside of the ribosome. Forms the main docking site for trigger factor binding to the ribosome. This chain is Large ribosomal subunit protein uL23, found in Corynebacterium jeikeium (strain K411).